Reading from the N-terminus, the 164-residue chain is Peptidyl-prolyl cis-trans isomerase A (164 aa).

M1 carries the N-acetylmethionine modification. V2 bears the N-acetylvaline; in Peptidyl-prolyl cis-trans isomerase A, N-terminally processed mark. One can recognise a PPIase cyclophilin-type domain in the interval 7-163 (FFDIAVDGEP…KKITIANCGQ (157 aa)). K28 bears the N6-acetyllysine; alternate mark. K28 is covalently cross-linked (Glycyl lysine isopeptide (Lys-Gly) (interchain with G-Cter in SUMO2); alternate). K28 is covalently cross-linked (Glycyl lysine isopeptide (Lys-Gly) (interchain with G-Cter in ubiquitin); alternate). K44 and K76 each carry N6-acetyllysine. Phosphoserine is present on S77. K82 carries the N6-acetyllysine; alternate modification. A Glycyl lysine isopeptide (Lys-Gly) (interchain with G-Cter in SUMO2); alternate cross-link involves residue K82. At T93 the chain carries Phosphothreonine. N108 carries N-linked (GlcNAc...) asparagine glycosylation. N6-acetyllysine occurs at positions 125 and 133.

This sequence belongs to the cyclophilin-type PPIase family. PPIase A subfamily. Interacts with protein phosphatase PPP3CA/calcineurin A. Interacts with isoform 2 of BSG/CD147. Interacts with FOXO1; the interaction promotes FOXO1 dephosphorylation, nuclear accumulation and transcriptional activity. Interacts with integrin ITGA2B:ITGB3; the interaction is ROS and peptidyl-prolyl cis-trans isomerase (PPIase) activity-dependent and is increased in the presence of thrombin. Interacts with MAP3K5. Interacts with TARDBP; the interaction is dependent on the RNA-binding activity of TARDBP and the PPIase activity of PPIA/CYPA and the acetylation of PPIA/CYPA at Lys-125 favors the interaction. Interacts with HNRNPA1, HNRNPA2B1, HNRNPC, RBMX, HNRNPK and HNRNPM. In terms of processing, acetylation at Lys-125 markedly inhibits catalysis of cis to trans isomerization. PPIA acetylation also antagonizes the immunosuppressive effects of cyclosporine by inhibiting the sequential steps of cyclosporine binding and calcineurin inhibition. Acetylation at Lys-125 favors the interaction with TARDBP.

The protein resides in the cytoplasm. It is found in the secreted. The protein localises to the nucleus. The enzyme catalyses [protein]-peptidylproline (omega=180) = [protein]-peptidylproline (omega=0). With respect to regulation, binds cyclosporin A (CsA). CsA mediates some of its effects via an inhibitory action on PPIase. In terms of biological role, catalyzes the cis-trans isomerization of proline imidic peptide bonds in oligopeptides. Exerts a strong chemotactic effect on leukocytes partly through activation of one of its membrane receptors BSG/CD147, initiating a signaling cascade that culminates in MAPK/ERK activation. Activates endothelial cells (ECs) in a proinflammatory manner by stimulating activation of NF-kappa-B and ERK, JNK and p38 MAP-kinases and by inducing expression of adhesion molecules including SELE and VCAM1. Induces apoptosis in ECs by promoting the FOXO1-dependent expression of CCL2 and BCL2L11 which are involved in EC chemotaxis and apoptosis. In response to oxidative stress, initiates proapoptotic and antiapoptotic signaling in ECs via activation of NF-kappa-B and AKT1 and up-regulation of antiapoptotic protein BCL2. Negatively regulates MAP3K5/ASK1 kinase activity, autophosphorylation and oxidative stress-induced apoptosis mediated by MAP3K5/ASK1. Necessary for the assembly of TARDBP in heterogeneous nuclear ribonucleoprotein (hnRNP) complexes and regulates TARDBP binding to RNA UG repeats and TARDBP-dependent expression of HDAC6, ATG7 and VCP which are involved in clearance of protein aggregates. Plays an important role in platelet activation and aggregation. Regulates calcium mobilization and integrin ITGA2B:ITGB3 bidirectional signaling via increased ROS production as well as by facilitating the interaction between integrin and the cell cytoskeleton. Binds heparan sulfate glycosaminoglycans. The protein is Peptidyl-prolyl cis-trans isomerase A (PPIA) of Oryctolagus cuniculus (Rabbit).